Reading from the N-terminus, the 399-residue chain is Probable protein phosphatase 2C 28 (399 aa).

Positions 48–356 (EFSMAVVQAN…DDITVIVVFL (309 aa)) constitute a PPM-type phosphatase domain. Residues Asp87, Gly88, Asp288, and Asp347 each contribute to the Mn(2+) site.

The protein belongs to the PP2C family. The cofactor is Mg(2+). Mn(2+) is required as a cofactor.

The catalysed reaction is O-phospho-L-seryl-[protein] + H2O = L-seryl-[protein] + phosphate. It carries out the reaction O-phospho-L-threonyl-[protein] + H2O = L-threonyl-[protein] + phosphate. In Oryza sativa subsp. japonica (Rice), this protein is Probable protein phosphatase 2C 28.